The primary structure comprises 403 residues: Phosphoglycerate kinase (403 aa).

Substrate contacts are provided by residues 22–24, R37, 60–63, R119, and R152; these read DLN and HLGN. Residues K202, E325, and 355–358 contribute to the ATP site; that span reads GGDT.

This sequence belongs to the phosphoglycerate kinase family. As to quaternary structure, monomer.

The protein localises to the cytoplasm. It catalyses the reaction (2R)-3-phosphoglycerate + ATP = (2R)-3-phospho-glyceroyl phosphate + ADP. It functions in the pathway carbohydrate degradation; glycolysis; pyruvate from D-glyceraldehyde 3-phosphate: step 2/5. In Orientia tsutsugamushi (strain Boryong) (Rickettsia tsutsugamushi), this protein is Phosphoglycerate kinase.